Reading from the N-terminus, the 284-residue chain is 4-hydroxybenzoate octaprenyltransferase (284 aa).

Transmembrane regions (helical) follow at residues 19–39 (IPILLILWPTLTALVLASHGL), 42–62 (ISYLVIFTIGVVVMRTVGCII), 85–105 (GQLSIKNAIWLCISLTLVAFI), 107–127 (VLFLNLYTILLSFVALFLAIL), 134–154 (FFAIPQLILGLAFNFGIFMAF), 165–185 (AWIFYIATICWTIAYDTIYAL), 211–231 (ILLFNFLSLLLLIILGIYCDF), 233–253 (SFFYLGVVICSLFFVRNYFLY), and 261–281 (CINAFSANHWIGLIIFIIAVI).

It belongs to the UbiA prenyltransferase family. Mg(2+) serves as cofactor.

It localises to the cell inner membrane. It carries out the reaction all-trans-octaprenyl diphosphate + 4-hydroxybenzoate = 4-hydroxy-3-(all-trans-octaprenyl)benzoate + diphosphate. The protein operates within cofactor biosynthesis; ubiquinone biosynthesis. Catalyzes the prenylation of para-hydroxybenzoate (PHB) with an all-trans polyprenyl group. Mediates the second step in the final reaction sequence of ubiquinone-8 (UQ-8) biosynthesis, which is the condensation of the polyisoprenoid side chain with PHB, generating the first membrane-bound Q intermediate 3-octaprenyl-4-hydroxybenzoate. The protein is 4-hydroxybenzoate octaprenyltransferase of Francisella tularensis subsp. tularensis (strain FSC 198).